The chain runs to 146 residues: Hemoglobin subunit beta (146 aa).

Position 1 is an N-acetylvaline (Val1). Residues 2 to 146 enclose the Globin domain; the sequence is HLTGEEKSAV…VANALAHKYH (145 aa). Phosphothreonine is present on Thr12. Ser44 carries the post-translational modification Phosphoserine. Residue Lys59 is modified to N6-acetyllysine. His63 is a heme b binding site. Lys82 is subject to N6-acetyllysine. His92 provides a ligand contact to heme b. Cys93 carries the S-nitrosocysteine modification. Lys144 carries the N6-acetyllysine modification.

Belongs to the globin family. Heterotetramer of two alpha chains and two beta chains. In terms of tissue distribution, red blood cells.

Involved in oxygen transport from the lung to the various peripheral tissues. The sequence is that of Hemoglobin subunit beta (HBB) from Leontocebus fuscicollis (Brown-mantled tamarin).